The primary structure comprises 378 residues: Deoxyhypusine synthase (378 aa).

Residues 107–111 (SNLIS), 133–135 (SAG), Glu139, and Asp253 contribute to the NAD(+) site. 138–139 (EE) is a spermidine binding site. A spermidine-binding site is contributed by Asp258. Residue Gly300 coordinates NAD(+). Residue His305 participates in spermidine binding. 325–326 (TG) serves as a coordination point for NAD(+). Spermidine is bound by residues 331 to 333 (GSD) and 340 to 346 (EAISWGK). Lys346 serves as the catalytic Nucleophile. An NAD(+)-binding site is contributed by 359-360 (DA).

Belongs to the deoxyhypusine synthase family. NAD(+) serves as cofactor.

It catalyses the reaction [eIF5A protein]-L-lysine + spermidine = [eIF5A protein]-deoxyhypusine + propane-1,3-diamine. Its pathway is protein modification; eIF5A hypusination. In terms of biological role, catalyzes the NAD-dependent oxidative cleavage of spermidine and the subsequent transfer of the butylamine moiety of spermidine to the epsilon-amino group of a specific lysine residue of the eIF-5A precursor protein to form the intermediate deoxyhypusine residue. The protein is Deoxyhypusine synthase (DYS1) of Debaryomyces hansenii (strain ATCC 36239 / CBS 767 / BCRC 21394 / JCM 1990 / NBRC 0083 / IGC 2968) (Yeast).